Here is a 311-residue protein sequence, read N- to C-terminus: Phosphoribosylamine--glycine ligase (311 aa).

Positions 1 to 191 constitute an ATP-grasp domain; that stretch reads DPRVRKQYIQ…LVQVLLAACR (191 aa).

The protein belongs to the GARS family.

It is found in the plastid. The protein resides in the chloroplast. The catalysed reaction is 5-phospho-beta-D-ribosylamine + glycine + ATP = N(1)-(5-phospho-beta-D-ribosyl)glycinamide + ADP + phosphate + H(+). It functions in the pathway purine metabolism; IMP biosynthesis via de novo pathway; N(1)-(5-phospho-D-ribosyl)glycinamide from 5-phospho-alpha-D-ribose 1-diphosphate: step 2/2. This is Phosphoribosylamine--glycine ligase (PUR2) from Vigna unguiculata (Cowpea).